Here is a 161-residue protein sequence, read N- to C-terminus: MKYDTSELCDIYQEDVNVVEPLFSNFGGRASFGGQIITVKCFEDNGLLYDLLEQNGRGRVLVVDGGGSVRRALVDAELARLAVQNEWEGLVIYGAVHQVDDLEELDIGIQAMAAIPVGAAGEGIGESDVRVNFGGVTFFSGDHLYADNTGIILSEDPLDIE.

Belongs to the RraA family. Homotrimer. Binds to both RNA-binding sites in the C-terminal region of Rne and to RhlB.

It localises to the cytoplasm. Globally modulates RNA abundance by binding to RNase E (Rne) and regulating its endonucleolytic activity. Can modulate Rne action in a substrate-dependent manner by altering the composition of the degradosome. Modulates RNA-binding and helicase activities of the degradosome. The polypeptide is Regulator of ribonuclease activity A (Shigella dysenteriae serotype 1 (strain Sd197)).